A 94-amino-acid polypeptide reads, in one-letter code: Sucrose operon repressor (94 aa).

The HTH lacI-type domain maps to 1–56; sequence MASLHDVARLAGVSKSTVSRVINDEYGVKEATKQKVRQAVAECGYVPNQVAKDLKE. The segment at residues 4 to 23 is a DNA-binding region (H-T-H motif); the sequence is LHDVARLAGVSKSTVSRVIN.

Its function is as follows. Repressor for the scr operon. Binds D-fructose as an inducer. The polypeptide is Sucrose operon repressor (scrR) (Vibrio alginolyticus).